Reading from the N-terminus, the 209-residue chain is A-type ATP synthase subunit D (209 aa).

Belongs to the V-ATPase D subunit family. Has multiple subunits with at least A(3), B(3), C, D, E, F, H, I and proteolipid K(x).

It is found in the cell membrane. Component of the A-type ATP synthase that produces ATP from ADP in the presence of a proton gradient across the membrane. In Methanoregula boonei (strain DSM 21154 / JCM 14090 / 6A8), this protein is A-type ATP synthase subunit D.